Reading from the N-terminus, the 233-residue chain is DNA repair protein RecO (233 aa).

Belongs to the RecO family.

Involved in DNA repair and RecF pathway recombination. The chain is DNA repair protein RecO from Psychromonas ingrahamii (strain DSM 17664 / CCUG 51855 / 37).